Reading from the N-terminus, the 293-residue chain is Cytosolic Fe-S cluster assembly factor CFD1 (293 aa).

Residue 25–32 (GKGGVGKS) participates in ATP binding. [4Fe-4S] cluster is bound by residues Cys-201 and Cys-204. Position 291 is a phosphoserine (Ser-291).

The protein belongs to the Mrp/NBP35 ATP-binding proteins family. NUBP2/CFD1 subfamily. As to quaternary structure, heterotetramer of 2 NBP35 and 2 CFD1 chains. It depends on [4Fe-4S] cluster as a cofactor.

It localises to the cytoplasm. Functionally, component of the cytosolic iron-sulfur (Fe/S) protein assembly (CIA) machinery. Required for maturation of extramitochondrial Fe-S proteins. The NBP35-CFD1 heterotetramer forms a Fe-S scaffold complex, mediating the de novo assembly of an Fe-S cluster and its transfer to target apoproteins. Nucleotide binding/hydrolysis seems to be critcal for loading of Fe-S clusters onto CFD1 and NBP35. Required for biogenesis and export of both ribosomal subunits, which may reflect a role in assembly of the Fe/S clusters in RLI1, a protein which performs rRNA processing and ribosome export. In Saccharomyces cerevisiae (strain ATCC 204508 / S288c) (Baker's yeast), this protein is Cytosolic Fe-S cluster assembly factor CFD1.